A 305-amino-acid polypeptide reads, in one-letter code: Tyrosine recombinase XerC (305 aa).

In terms of domain architecture, Core-binding (CB) spans 1–84 (MNEVFESYLT…TLRGFYKYAL (84 aa)). The Tyr recombinase domain occupies 105–299 (KLPVFMFPKQ…TAEQLQNLYK (195 aa)). Residues R146, K170, H251, R254, and H277 contribute to the active site. Y286 (O-(3'-phospho-DNA)-tyrosine intermediate) is an active-site residue.

The protein belongs to the 'phage' integrase family. XerC subfamily. In terms of assembly, forms a cyclic heterotetrameric complex composed of two molecules of XerC and two molecules of XerD.

It is found in the cytoplasm. In terms of biological role, site-specific tyrosine recombinase, which acts by catalyzing the cutting and rejoining of the recombining DNA molecules. The XerC-XerD complex is essential to convert dimers of the bacterial chromosome into monomers to permit their segregation at cell division. It also contributes to the segregational stability of plasmids. This chain is Tyrosine recombinase XerC, found in Treponema denticola (strain ATCC 35405 / DSM 14222 / CIP 103919 / JCM 8153 / KCTC 15104).